An 864-amino-acid polypeptide reads, in one-letter code: DNA mismatch repair protein MutS (864 aa).

607–614 (GPNMGGKS) contributes to the ATP binding site.

It belongs to the DNA mismatch repair MutS family.

Its function is as follows. This protein is involved in the repair of mismatches in DNA. It is possible that it carries out the mismatch recognition step. This protein has a weak ATPase activity. This Neisseria meningitidis serogroup C (strain 053442) protein is DNA mismatch repair protein MutS.